Reading from the N-terminus, the 71-residue chain is Small ribosomal subunit protein bS21 (71 aa).

The segment covering 34–44 (RREHYEKPTSE) has biased composition (basic and acidic residues). The interval 34–71 (RREHYEKPTSERKRKKAAAVKRHAKKLSRDNARRTRLY) is disordered. A compositionally biased stretch (basic residues) spans 45–59 (RKRKKAAAVKRHAKK). The span at 60-71 (LSRDNARRTRLY) shows a compositional bias: basic and acidic residues.

This sequence belongs to the bacterial ribosomal protein bS21 family.

This chain is Small ribosomal subunit protein bS21, found in Idiomarina loihiensis (strain ATCC BAA-735 / DSM 15497 / L2-TR).